Here is an 885-residue protein sequence, read N- to C-terminus: Envelope glycoprotein gp160 (885 aa).

Positions 1-23 are cleaved as a signal peptide; sequence MGCLGNQLLIALLLVSVLEICCV. Over 24 to 700 the chain is Extracellular; the sequence is QYVTVFYGVP…TSWIRYIQYG (677 aa). N37 is a glycosylation site (N-linked (GlcNAc...) asparagine; by host). A disulfide bridge connects residues C44 and C57. Residues N70, N114, N148, N156, N173, N186, N201, N213, N245, N255, N279, N285, N296, N307, N317, N372, and N378 are each glycosylated (N-linked (GlcNAc...) asparagine; by host). Cystine bridges form between C101–C221, C108–C212, C113–C170, C234–C264, and C244–C256. The segment at 113–169 is V1; it reads CNKTETDRWGLTGNAGTTTTAITTTATPSVAENVINESNPCIKNNSCAGLEQEPMIG. The V2 stretch occupies residues 170-212; it reads CKFNMTGLNRDKKKEYNETWYSRDLICEQSANESESKCYMHHC. The segment at 312–344 is V3; the sequence is CRRPENKTVLPVTIMSGLVFHSQPINERPKQAW. A disulfide bond links C312 and C345. 2 disulfides stabilise this stretch: C396-C465 and C403-C438. The interval 403 to 438 is V4; sequence CKMNWFLNWVEDRDQKGGRWKQQNRKEQQKKNYVPC. N-linked (GlcNAc...) asparagine; by host glycans are attached at residues N466, N482, and N485. Residues 481 to 488 are V5; the sequence is SNETNITM. Residues 532 to 552 form a fusion peptide region; the sequence is GVFVLGFLGFLATAGSAMGAA. The segment at 595 to 611 is immunosuppression; the sequence is LQTRVTAIEKYLKDQAQ. N-linked (GlcNAc...) asparagine; by host glycosylation is found at N631, N640, and N656. Residues 640 to 672 are a coiled coil; it reads NMTWQEWERQVDFLEANITQLLEEAQIQQEKNM. Positions 677–698 are MPER; binding to GalCer; that stretch reads KLNSWDIFGNWFDLTSWIRYIQ. Residues 701–721 traverse the membrane as a helical segment; it reads VLIVLGVIGLRIVIYVVQMLA. The Cytoplasmic segment spans residues 722-885; it reads RLRQGYRPVF…IRQGLELTLL (164 aa). The short motif at 727–730 is the YXXV motif; contains endocytosis signal element; sequence YRPV. A disordered region spans residues 743 to 764; it reads IHKGQEPPTKEGEEGDGGDRGG. Positions 745-764 are enriched in basic and acidic residues; that stretch reads KGQEPPTKEGEEGDGGDRGG. A lipid anchor (S-palmitoyl cysteine; by host) is attached at C793. A Di-leucine internalization motif motif is present at residues 884 to 885; the sequence is LL.

The mature envelope protein (Env) consists of a homotrimer of non-covalently associated gp120-gp41 heterodimers. The resulting complex protrudes from the virus surface as a spike. Interacts with host CD4 and CCR5. Gp120 also interacts with the C-type lectins CD209/DC-SIGN and CLEC4M/DC-SIGNR (collectively referred to as DC-SIGN(R)). In terms of assembly, the mature envelope protein (Env) consists of a homotrimer of non-covalently associated gp120-gp41 heterodimers. The resulting complex protrudes from the virus surface as a spike. In terms of processing, specific enzymatic cleavages in vivo yield mature proteins. Envelope glycoproteins are synthesized as an inactive precursor that is heavily N-glycosylated and processed likely by host cell furin in the Golgi to yield the mature SU and TM proteins. The cleavage site between SU and TM requires the minimal sequence [KR]-X-[KR]-R. Post-translationally, palmitoylation of the transmembrane protein and of Env polyprotein (prior to its proteolytic cleavage) is essential for their association with host cell membrane lipid rafts. Palmitoylation is therefore required for envelope trafficking to classical lipid rafts, but not for viral replication.

Its subcellular location is the virion membrane. It is found in the host cell membrane. The protein resides in the host endosome membrane. Its function is as follows. The surface protein gp120 (SU) attaches the virus to the host lymphoid cell by binding to the primary receptor CD4. This interaction induces a structural rearrangement creating a high affinity binding site for a chemokine coreceptor like CCR5. This peculiar 2 stage receptor-interaction strategy allows gp120 to maintain the highly conserved coreceptor-binding site in a cryptic conformation, protected from neutralizing antibodies. These changes are transmitted to the transmembrane protein gp41 and are thought to activate its fusogenic potential by unmasking its fusion peptide. Functionally, surface protein gp120 (SU) may target the virus to gut-associated lymphoid tissue (GALT) by binding host ITGA4/ITGB7 (alpha-4/beta-7 integrins), a complex that mediates T-cell migration to the GALT. Interaction between gp120 and ITGA4/ITGB7 would allow the virus to enter GALT early in the infection, infecting and killing most of GALT's resting CD4+ T-cells. This T-cell depletion is believed to be the major insult to the host immune system leading to AIDS. The surface protein gp120 is a ligand for CD209/DC-SIGN and CLEC4M/DC-SIGNR, which are respectively found on dendritic cells (DCs), and on endothelial cells of liver sinusoids and lymph node sinuses. These interactions allow capture of viral particles at mucosal surfaces by these cells and subsequent transmission to permissive cells. DCs are professional antigen presenting cells, critical for host immunity by inducing specific immune responses against a broad variety of pathogens. They act as sentinels in various tissues where they take up antigen, process it, and present it to T-cells following migration to lymphoid organs. SIV subverts the migration properties of dendritic cells to gain access to CD4+ T-cells in lymph nodes. Virus transmission to permissive T-cells occurs either in trans (without DCs infection, through viral capture and transmission), or in cis (following DCs productive infection, through the usual CD4-gp120 interaction), thereby inducing a robust infection. In trans infection, bound virions remain infectious over days and it is proposed that they are not degraded, but protected in non-lysosomal acidic organelles within the DCs close to the cell membrane thus contributing to the viral infectious potential during DCs' migration from the periphery to the lymphoid tissues. On arrival at lymphoid tissues, intact virions recycle back to DCs' cell surface allowing virus transmission to CD4+ T-cells. Virion capture also seems to lead to MHC-II-restricted viral antigen presentation, and probably to the activation of SIV-specific CD4+ cells. In terms of biological role, the transmembrane protein gp41 (TM) acts as a class I viral fusion protein. Under the current model, the protein has at least 3 conformational states: pre-fusion native state, pre-hairpin intermediate state, and post-fusion hairpin state. During fusion of viral and target intracellular membranes, the coiled coil regions (heptad repeats) assume a trimer-of-hairpins structure, positioning the fusion peptide in close proximity to the C-terminal region of the ectodomain. The formation of this structure appears to drive apposition and subsequent fusion of viral and target cell membranes. Complete fusion occurs in host cell endosomes. The virus undergoes clathrin-dependent internalization long before endosomal fusion, thus minimizing the surface exposure of conserved viral epitopes during fusion and reducing the efficacy of inhibitors targeting these epitopes. Membranes fusion leads to delivery of the nucleocapsid into the cytoplasm. Its function is as follows. The envelope glycoprotein gp160 precursor down-modulates cell surface CD4 antigen by interacting with it in the endoplasmic reticulum and blocking its transport to the cell surface. Functionally, the gp120-gp41 heterodimer allows rapid transcytosis of the virus through CD4 negative cells such as simple epithelial monolayers of the intestinal, rectal and endocervical epithelial barriers. Both gp120 and gp41 specifically recognize glycosphingolipids galactosyl-ceramide (GalCer) or 3' sulfo-galactosyl-ceramide (GalS) present in the lipid rafts structures of epithelial cells. Binding to these alternative receptors allows the rapid transcytosis of the virus through the epithelial cells. This transcytotic vesicle-mediated transport of virions from the apical side to the basolateral side of the epithelial cells does not involve infection of the cells themselves. The chain is Envelope glycoprotein gp160 (env) from Cercopithecidae (Old World monkeys).